The chain runs to 577 residues: Galectin-3-binding protein (577 aa).

Positions 1 to 18 are cleaved as a signal peptide; that stretch reads MALLWLLSVFLLVPGTQG. Residues 24 to 124 form the SRCR domain; the sequence is MRLVNGASAN…HEKDAGVVCS (101 aa). 3 disulfides stabilise this stretch: cysteine 49/cysteine 113, cysteine 62/cysteine 123, and cysteine 93/cysteine 103. The N-linked (GlcNAc...) asparagine glycan is linked to asparagine 69. Residue asparagine 125 is glycosylated (N-linked (GlcNAc...) asparagine). Residues 153 to 221 form the BTB domain; it reads CDLFIQVTGQ…FYSRRIEVSM (69 aa). In terms of domain architecture, BACK spans 260-360; that stretch reads PLDLYAYARA…MLPQELFELQ (101 aa). Residues asparagine 362, asparagine 398, asparagine 543, and asparagine 572 are each glycosylated (N-linked (GlcNAc...) asparagine).

In terms of assembly, homodimers and homomultimers. The multimers form ring-like structures with a diameter of 30-40 nm. Binds LGALS1 and LGALS3. Binds ITGB1, COL4A1, COL5A1, COL6A1, FN1 and NID. Interacts with PPIC (in vitro). The unglycosylated form interacts with PDE4DIP isoform 2/MMG8/SMYLE; this interaction may connect a pericentrosomal complex to the gamma-tubulin ring complex (gamma-TuRC) to promote microtubule assembly and acetylation. In terms of processing, N-glycosylated. As to expression, detected in embryo, liver, spleen, kidney, lung, heart, intestine, thymus and lymph node.

The protein resides in the secreted. It is found in the extracellular space. Its subcellular location is the extracellular matrix. In terms of biological role, promotes integrin-mediated cell adhesion. May stimulate host defense against viruses and tumor cells. The chain is Galectin-3-binding protein (Lgals3bp) from Mus musculus (Mouse).